A 190-amino-acid chain; its full sequence is Probable RNA-binding protein 18 (190 aa).

Positions 25 to 106 (HRLWIGNLDP…KKLVVRWAHA (82 aa)) constitute an RRM domain. Residues 166–190 (VYSYFKPPDKKRTTPYSRTAWKSRR) form a disordered region.

The polypeptide is Probable RNA-binding protein 18 (Rbm18) (Mus musculus (Mouse)).